A 195-amino-acid chain; its full sequence is Putative 3-methyladenine DNA glycosylase (195 aa).

This sequence belongs to the DNA glycosylase MPG family.

The protein is Putative 3-methyladenine DNA glycosylase of Synechococcus sp. (strain JA-3-3Ab) (Cyanobacteria bacterium Yellowstone A-Prime).